Here is a 587-residue protein sequence, read N- to C-terminus: Vesicular glutamate transporter 2.2 (587 aa).

Over 1 to 71 (MDTVKERVLA…CTCFGLPRRY (71 aa)) the chain is Cytoplasmic. A helical membrane pass occupies residues 72 to 92 (IIAIMSGLGFCISFGIRCNLG). Residues 93 to 125 (VAIVDMVNNSTIHKGGKIIIKGKAKFNWDPETV) are Vesicular-facing. Residues Asn100 and Asn101 are each glycosylated (N-linked (GlcNAc...) asparagine). Residues 126-146 (GMIHGSFFWGYTVTQIPGGYI) form a helical membrane-spanning segment. The Cytoplasmic portion of the chain corresponds to 147-149 (SSR). A helical membrane pass occupies residues 150 to 170 (LAANRVFGAAILLTSTLNMFI). At 171–180 (PSAARVHYGC) the chain is on the vesicular side. Residues 181–203 (VMFVRILQGLVEGVTYPACHGIW) form a helical membrane-spanning segment. The Cytoplasmic portion of the chain corresponds to 204–217 (SKWAPPLERSRLAT). Residues 218 to 238 (TSFCGSYAGAVVAMPLAGILV) traverse the membrane as a helical segment. Over 239–245 (QYSGWSS) the chain is Vesicular. The helical transmembrane segment at 246 to 266 (VFYIYGSFGIVWYMFWILVSY) threads the bilayer. Over 267–311 (ESPADHPTITDEERTYIEESIGESAKLLGAMEKYKTPWRKFFTSM) the chain is Cytoplasmic. Residues 312-332 (PVYAIIVANFCRSWTFYLLLI) form a helical membrane-spanning segment. The Vesicular portion of the chain corresponds to 333–350 (SQPAYFEEVFGFEISKVG). Residues 351 to 371 (MVSALPHLVMTIIVPIGGQLA) traverse the membrane as a helical segment. Over 372–387 (DYLRSKNILTTTTVRK) the chain is Cytoplasmic. Residues 388-408 (IMNCGGFGMEATLLLVVGFSH) traverse the membrane as a helical segment. Topologically, residues 409-410 (SK) are vesicular. The helical transmembrane segment at 411–431 (GVAISFLVLAVGFSGFAISGF) threads the bilayer. Topologically, residues 432-444 (NVNHLDIAPRYAS) are cytoplasmic. A helical transmembrane segment spans residues 445 to 465 (ILMGISNGVGTLSGMVCPLIV). Residues 466 to 479 (GAMTKNKTREEWQN) lie on the Vesicular side of the membrane. Asn471 carries N-linked (GlcNAc...) asparagine glycosylation. A helical transmembrane segment spans residues 480 to 500 (VFLIASLVHYGGVIFYGIFAS). At 501–587 (GEKQPWADPE…ERTYTGDGYS (87 aa)) the chain is on the cytoplasmic side.

This sequence belongs to the major facilitator superfamily. Sodium/anion cotransporter family. VGLUT subfamily. Expressed in spinal cord.

The protein resides in the cytoplasmic vesicle. The protein localises to the secretory vesicle. It localises to the synaptic vesicle membrane. Its subcellular location is the membrane. It is found in the synapse. The protein resides in the synaptosome. The protein localises to the cell membrane. It catalyses the reaction L-glutamate(out) = L-glutamate(in). The catalysed reaction is 3 Na(+)(out) + phosphate(out) = 3 Na(+)(in) + phosphate(in). It carries out the reaction phosphate(in) = phosphate(out). The enzyme catalyses K(+)(in) + H(+)(out) = K(+)(out) + H(+)(in). It catalyses the reaction chloride(in) = chloride(out). Its activity is regulated as follows. Chloride channel activity is allosterically activated by lumenal H(+) and Cl(-) leading to synaptic vesicles acidification. The L-glutamate transport activity is allosterically activated by lumenal H(+) and Cl(-). The allosteric requirement for H(+) efficiently prevents non-vesicular efflux across the plasma membrane. The L-glutamate uniporter activity exhibits a biphasic dependence on chloride concentration. In terms of biological role, multifunctional transporter that transports L-glutamate as well as multiple ions such as chloride, proton, potassium, sodium and phosphate. At the synaptic vesicle membrane, mainly functions as a uniporter which transports preferentially L-glutamate but also, phosphate from the cytoplasm into synaptic vesicles at presynaptic nerve terminals of excitatory neural cells. The L-glutamate or phosphate uniporter activity is electrogenic and is driven by the proton electrochemical gradient, mainly by the electrical gradient established by the vacuolar H(+)-ATPase across the synaptic vesicle membrane. In addition, functions as a chloride channel that allows a chloride permeation through the synaptic vesicle membrane therefore affects the proton electrochemical gradient and promotes synaptic vesicles acidification. Moreover, functions as a vesicular K(+)/H(+) antiport allowing to maintain the electrical gradient and to decrease chemical gradient and therefore sustain vesicular L-glutamate uptake. The vesicular H(+)/H(+) antiport activity is electroneutral. At the plasma membrane, following exocytosis, functions as a symporter of Na(+) and phosphate from the extracellular space to the cytoplasm allowing synaptic phosphate homeostasis regulation. The symporter activity is driven by an inside negative membrane potential and is electrogenic. Also involved in the regulation of retinal hyaloid vessel regression during postnatal development. May also play a role in the endocrine L-glutamatergic system of other tissues such as pineal gland and pancreas. This Danio rerio (Zebrafish) protein is Vesicular glutamate transporter 2.2 (slc17a6a).